The primary structure comprises 267 residues: Stage 0 sporulation protein A (267 aa).

One can recognise a Response regulatory domain in the interval 5–123 (KVCVADDNRE…NLVGHIRQVS (119 aa)). The Ca(2+) site is built by D10, D11, and D56. A 4-aspartylphosphate modification is found at D56. The tract at residues 126–150 (ASSVTHRAPSSQSSIIRSSQPEPKK) is disordered. Low complexity predominate over residues 135 to 145 (SSQSSIIRSSQ). The segment at residues 199–218 (PDIAKKFNTTASRVERAIRH) is a DNA-binding region (H-T-H motif).

As to quaternary structure, interacts with small protein YqaH, which is encoded in the skin prophage-like element. Ca(2+) is required as a cofactor. Phosphorylated by KinA and KinB.

The protein resides in the cytoplasm. Its function is as follows. May play the central regulatory role in sporulation. It may be an element of the effector pathway responsible for the activation of sporulation genes in response to nutritional stress. Spo0A may act in concert with Spo0H (a sigma factor) to control the expression of some genes that are critical to the sporulation process. Repressor of abrB, activator of the spoIIa operon. Binds the DNA sequence 5'-TGNCGAA-3' (0A box). The protein is Stage 0 sporulation protein A (spo0A) of Bacillus subtilis (strain 168).